Reading from the N-terminus, the 416-residue chain is Venom allergen 5 (416 aa).

Positions 1-24 are cleaved as a signal peptide; the sequence is MKGILLLFLKLVVLFVYLCSSVLS. The 161-residue stretch at 57–217 folds into the SCP domain; that stretch reads DDRNTIINLH…NYGPAGNLDD (161 aa). Arg-82 is modified (arginine amide; in Cryptide Pep-4).

The protein belongs to the CRISP family. Venom allergen 5-like subfamily. Post-translationally, contains 9 disulfide bonds. In terms of tissue distribution, expressed by the venom gland.

It is found in the secreted. In terms of biological role, presents weak lactate dehydrogenase (LDH) release from mast cells. Does not induce hemolytic activity, mast cell degranulation, and antimicrobial effects. In vivo, injection into mice causes moderate edema formation, but induces very weak or no change in nociceptive sensibility. It also causes an alteration in rearing (standing on hind limbs), but does not impact locomotion. This chain is Venom allergen 5, found in Tityus serrulatus (Brazilian scorpion).